A 285-amino-acid polypeptide reads, in one-letter code: Probable endonuclease 4 (285 aa).

Residues H68, H108, E145, D179, H182, H216, D229, H231, and E261 each contribute to the Zn(2+) site.

The protein belongs to the AP endonuclease 2 family. Zn(2+) serves as cofactor.

The enzyme catalyses Endonucleolytic cleavage to 5'-phosphooligonucleotide end-products.. Its function is as follows. Endonuclease IV plays a role in DNA repair. It cleaves phosphodiester bonds at apurinic or apyrimidinic (AP) sites, generating a 3'-hydroxyl group and a 5'-terminal sugar phosphate. The protein is Probable endonuclease 4 of Geotalea daltonii (strain DSM 22248 / JCM 15807 / FRC-32) (Geobacter daltonii).